A 1040-amino-acid chain; its full sequence is Multidrug resistance protein MdtB (1040 aa).

11 helical membrane passes run 15–37, 345–362, 367–389, 396–418, 438–460, 472–494, 535–557, 867–889, 909–931, 968–990, and 1000–1022; these read LFIL…GIIG, FELM…YLFL, ATII…MVFL, LTLM…VIEN, GEIG…PLLF, FAVT…TPMM, HPWL…WITI, VWLI…ESFI, LIIA…IGIV, ILMT…GVGA, and MVGG…YLLF.

The protein belongs to the resistance-nodulation-cell division (RND) (TC 2.A.6) family. MdtB subfamily. In terms of assembly, part of a tripartite efflux system composed of MdtA, MdtB and MdtC. MdtB forms a heteromultimer with MdtC.

It localises to the cell inner membrane. The protein is Multidrug resistance protein MdtB of Salmonella typhi.